The sequence spans 319 residues: MEPSKANEDFLIAKAHAKINLHLEVLGIRSDGFHELAMVMQSINLSDQLKMIKRVDNTINLKSNNKEISNGDDNLIIKASKLLRNKVENQELGVDIELEKNIPIGAGLAGGSTDAAATLLGLNKLWKLNLKTDELENLSKEIGSDIPFCISGGRQICFGRGEILEKLKFDQIQLGLILVKDPSIQVSTPVAYKKYKDQFGESYLEDDRDFEIKRNSIRSIDWSDQSLFDNRKEIQNDLQKSVRPITPEVEKSLDLLSSLPDSRLVSMSGSGPSCFALFQNYDQANKVLKEHVNEFERAGLSAWACSMMSNGVELRNEFI.

Lys18 is an active-site residue. 103–113 (PIGAGLAGGST) lines the ATP pocket. Asp145 is an active-site residue.

It belongs to the GHMP kinase family. IspE subfamily.

The catalysed reaction is 4-CDP-2-C-methyl-D-erythritol + ATP = 4-CDP-2-C-methyl-D-erythritol 2-phosphate + ADP + H(+). The protein operates within isoprenoid biosynthesis; isopentenyl diphosphate biosynthesis via DXP pathway; isopentenyl diphosphate from 1-deoxy-D-xylulose 5-phosphate: step 3/6. Its function is as follows. Catalyzes the phosphorylation of the position 2 hydroxy group of 4-diphosphocytidyl-2C-methyl-D-erythritol. The protein is 4-diphosphocytidyl-2-C-methyl-D-erythritol kinase of Prochlorococcus marinus (strain NATL1A).